The chain runs to 682 residues: E3 ubiquitin-protein ligase RNF103 (682 aa).

Transmembrane regions (helical) follow at residues F6–V26, L326–Q346, L366–F386, and M411–I431. Over residues E525–N542 the composition is skewed to acidic residues. Residues E525–S549 are disordered. The RING-type zinc finger occupies C618–R660.

In terms of assembly, interacts with DERL1 and VCP. As to expression, expressed in different tissues including hippocampus, cerebral cortex, heart, kidney, spleen and lung. Expression is increased in hippocampus and frontal cortex after chronic treatment with antidepressants.

The protein localises to the endoplasmic reticulum membrane. The enzyme catalyses S-ubiquitinyl-[E2 ubiquitin-conjugating enzyme]-L-cysteine + [acceptor protein]-L-lysine = [E2 ubiquitin-conjugating enzyme]-L-cysteine + N(6)-ubiquitinyl-[acceptor protein]-L-lysine.. It participates in protein modification; protein ubiquitination. In terms of biological role, acts as an E2-dependent E3 ubiquitin-protein ligase, probably involved in the ER-associated protein degradation pathway. The sequence is that of E3 ubiquitin-protein ligase RNF103 (Rnf103) from Rattus norvegicus (Rat).